We begin with the raw amino-acid sequence, 201 residues long: Recombination protein RecR (201 aa).

The C4-type zinc finger occupies 60 to 75; the sequence is CKRCGSYAETEICEIC. The region spanning 83–178 is the Toprim domain; the sequence is HTFCVVEQPE…NVTRIAYGIT (96 aa).

The protein belongs to the RecR family.

In terms of biological role, may play a role in DNA repair. It seems to be involved in an RecBC-independent recombinational process of DNA repair. It may act with RecF and RecO. The sequence is that of Recombination protein RecR from Leptospira interrogans serogroup Icterohaemorrhagiae serovar copenhageni (strain Fiocruz L1-130).